The chain runs to 731 residues: Catalase-peroxidase (731 aa).

The disordered stretch occupies residues Met1 to Asn23. A cross-link (tryptophyl-tyrosyl-methioninium (Trp-Tyr) (with M-244)) is located at residues Trp95–Tyr218. The Proton acceptor role is filled by His96. A cross-link (tryptophyl-tyrosyl-methioninium (Tyr-Met) (with W-95)) is located at residues Tyr218–Met244. His259 serves as a coordination point for heme b.

The protein belongs to the peroxidase family. Peroxidase/catalase subfamily. As to quaternary structure, homodimer or homotetramer. Heme b serves as cofactor. Formation of the three residue Trp-Tyr-Met cross-link is important for the catalase, but not the peroxidase activity of the enzyme.

The enzyme catalyses H2O2 + AH2 = A + 2 H2O. It catalyses the reaction 2 H2O2 = O2 + 2 H2O. In terms of biological role, bifunctional enzyme with both catalase and broad-spectrum peroxidase activity. This Synechococcus sp. (strain WH7803) protein is Catalase-peroxidase.